We begin with the raw amino-acid sequence, 398 residues long: NADH-quinone oxidoreductase subunit D (398 aa).

Belongs to the complex I 49 kDa subunit family. In terms of assembly, NDH-1 is composed of 14 different subunits. Subunits NuoB, C, D, E, F, and G constitute the peripheral sector of the complex.

It localises to the cell inner membrane. It carries out the reaction a quinone + NADH + 5 H(+)(in) = a quinol + NAD(+) + 4 H(+)(out). NDH-1 shuttles electrons from NADH, via FMN and iron-sulfur (Fe-S) centers, to quinones in the respiratory chain. The immediate electron acceptor for the enzyme in this species is believed to be ubiquinone. Couples the redox reaction to proton translocation (for every two electrons transferred, four hydrogen ions are translocated across the cytoplasmic membrane), and thus conserves the redox energy in a proton gradient. This Rhodospirillum centenum (strain ATCC 51521 / SW) protein is NADH-quinone oxidoreductase subunit D.